The primary structure comprises 531 residues: Bifunctional protein TrpGD (531 aa).

Positions 3–196 (DILLLDNIDS…LAWAQQKLEP (194 aa)) constitute a Glutamine amidotransferase type-1 domain. Position 57–59 (57–59 (GPG)) interacts with L-glutamine. Catalysis depends on Cys-84, which acts as the Nucleophile; for GATase activity. L-glutamine contacts are provided by residues Gln-88 and 134–135 (SL). Residues His-170 and Glu-172 each act as for GATase activity in the active site. Residues 202–531 (PILEKLYQAQ…DRVTALAARG (330 aa)) form an anthranilate phosphoribosyltransferase region.

In the C-terminal section; belongs to the anthranilate phosphoribosyltransferase family. In terms of assembly, heterotetramer consisting of two non-identical subunits: a beta subunit (TrpG) and a large alpha subunit (TrpE).

The enzyme catalyses chorismate + L-glutamine = anthranilate + pyruvate + L-glutamate + H(+). The catalysed reaction is N-(5-phospho-beta-D-ribosyl)anthranilate + diphosphate = 5-phospho-alpha-D-ribose 1-diphosphate + anthranilate. It participates in amino-acid biosynthesis; L-tryptophan biosynthesis; L-tryptophan from chorismate: step 1/5. It functions in the pathway amino-acid biosynthesis; L-tryptophan biosynthesis; L-tryptophan from chorismate: step 2/5. Its activity is regulated as follows. Cooperatively feedback inhibited by tryptophan. In terms of biological role, part of a heterotetrameric complex that catalyzes the two-step biosynthesis of anthranilate, an intermediate in the biosynthesis of L-tryptophan. In the first step, the glutamine-binding beta subunit (TrpG) of anthranilate synthase (AS) provides the glutamine amidotransferase activity which generates ammonia as a substrate that, along with chorismate, is used in the second step, catalyzed by the large alpha subunit of AS (TrpE) to produce anthranilate. In the absence of TrpG, TrpE can synthesize anthranilate directly from chorismate and high concentrations of ammonia. In addition to synthesizing anthranilate, it also catalyzes the second step of the pathway, the transfer of the phosphoribosyl group of 5-phosphorylribose-1-pyrophosphate (PRPP) to anthranilate. In Escherichia coli (strain K12), this protein is Bifunctional protein TrpGD (trpGD).